Reading from the N-terminus, the 138-residue chain is Basic phospholipase A2 homolog Ts-K49a (138 aa).

The N-terminal stretch at 1 to 16 is a signal peptide; that stretch reads MRTLWIMAVLLLGVEG. 7 disulfides stabilise this stretch: Cys-42–Cys-131, Cys-44–Cys-60, Cys-59–Cys-111, Cys-65–Cys-138, Cys-66–Cys-104, Cys-73–Cys-97, and Cys-91–Cys-102. Residues 121 to 133 are important for membrane-damaging activities in eukaryotes and bacteria; heparin-binding; sequence KKKKINLKLFCKK.

In terms of tissue distribution, expressed by the venom gland.

It is found in the secreted. Snake venom phospholipase A2 homolog that lacks catalytic activity. It shows myotoxic and weak anticoagulant activities and induces local edema a few hours after injection (5-10 ug) in the hind paw. A model of myotoxic mechanism has been proposed: an apo Lys49-PLA2 is activated by the entrance of a hydrophobic molecule (e.g. fatty acid) at the hydrophobic channel of the protein leading to a reorientation of a monomer. This reorientation causes a transition between 'inactive' to 'active' states, causing alignment of C-terminal and membrane-docking sites (MDoS) side-by-side and putting the membrane-disruption sites (MDiS) in the same plane, exposed to solvent and in a symmetric position for both monomers. The MDoS region stabilizes the toxin on membrane by the interaction of charged residues with phospholipid head groups. Subsequently, the MDiS region destabilizes the membrane with penetration of hydrophobic residues. This insertion causes a disorganization of the membrane, allowing an uncontrolled influx of ions (i.e. calcium and sodium), and eventually triggering irreversible intracellular alterations and cell death. This chain is Basic phospholipase A2 homolog Ts-K49a, found in Trimeresurus stejnegeri (Chinese green tree viper).